The chain runs to 213 residues: Phosphoenolpyruvate guanylyltransferase (213 aa).

Phosphoenolpyruvate is bound by residues Thr-146, Gly-161, and Ser-164.

This sequence belongs to the CofC family.

It catalyses the reaction phosphoenolpyruvate + GTP + H(+) = enolpyruvoyl-2-diphospho-5'-guanosine + diphosphate. Its pathway is cofactor biosynthesis; coenzyme F420 biosynthesis. In terms of biological role, guanylyltransferase that catalyzes the activation of phosphoenolpyruvate (PEP) as enolpyruvoyl-2-diphospho-5'-guanosine, via the condensation of PEP with GTP. It is involved in the biosynthesis of coenzyme F420, a hydride carrier cofactor. In Mycolicibacterium vanbaalenii (strain DSM 7251 / JCM 13017 / BCRC 16820 / KCTC 9966 / NRRL B-24157 / PYR-1) (Mycobacterium vanbaalenii), this protein is Phosphoenolpyruvate guanylyltransferase.